A 325-amino-acid chain; its full sequence is Chain length determinant protein (325 aa).

Residues Met1 to Lys31 lie on the Cytoplasmic side of the membrane. The chain crosses the membrane as a helical span at residues Met32–Ala52. The Periplasmic portion of the chain corresponds to Lys53–Lys294. The chain crosses the membrane as a helical span at residues Ala295–Gly315. Residues Arg316–Lys325 lie on the Cytoplasmic side of the membrane.

Belongs to the WzzB/Cld/Rol family.

It localises to the cell inner membrane. It participates in bacterial outer membrane biogenesis; lipopolysaccharide biosynthesis. In terms of biological role, confers a modal distribution of chain length on the O-antigen component of lipopolysaccharide (LPS). Gives rise to a reduced number of short chain molecules and increases in numbers of longer molecules, with a modal value of 13 (in strain O111/M92) and of 17 (in strain K12). This is Chain length determinant protein (wzzB) from Escherichia coli.